Here is a 134-residue protein sequence, read N- to C-terminus: Large ribosomal subunit protein eL14z (134 aa).

This sequence belongs to the eukaryotic ribosomal protein eL14 family.

This is Large ribosomal subunit protein eL14z (RPL14A) from Arabidopsis thaliana (Mouse-ear cress).